The chain runs to 186 residues: Probable nicotinate-nucleotide adenylyltransferase (186 aa).

Belongs to the NadD family.

The enzyme catalyses nicotinate beta-D-ribonucleotide + ATP + H(+) = deamido-NAD(+) + diphosphate. Its pathway is cofactor biosynthesis; NAD(+) biosynthesis; deamido-NAD(+) from nicotinate D-ribonucleotide: step 1/1. Functionally, catalyzes the reversible adenylation of nicotinate mononucleotide (NaMN) to nicotinic acid adenine dinucleotide (NaAD). In Tropheryma whipplei (strain TW08/27) (Whipple's bacillus), this protein is Probable nicotinate-nucleotide adenylyltransferase.